The primary structure comprises 78 residues: RNA-binding protein Hfq (78 aa).

Positions 10–69 (DPFLNALRKEHVPVSIYLVNGIKLQGNIESFDQYVVLLRNTVTQMVYKHAISTVVPARPV) constitute a Sm domain.

This sequence belongs to the Hfq family. In terms of assembly, homohexamer.

Functionally, RNA chaperone that binds small regulatory RNA (sRNAs) and mRNAs to facilitate mRNA translational regulation in response to envelope stress, environmental stress and changes in metabolite concentrations. Also binds with high specificity to tRNAs. The polypeptide is RNA-binding protein Hfq (Paraburkholderia phytofirmans (strain DSM 17436 / LMG 22146 / PsJN) (Burkholderia phytofirmans)).